The chain runs to 467 residues: Gustatory and odorant receptor 22 (467 aa).

Residues 1-106 (MIHTQMEDAQ…MPRTTFTWCS (106 aa)) lie on the Cytoplasmic side of the membrane. A helical transmembrane segment spans residues 107–127 (KAFLWAYFIYACETVIVLVVA). At 128–144 (RERINKFISTSDKRFDE) the chain is on the extracellular side. Residues 145–165 (VIYNIIFMSIMVPHFLLPVAS) traverse the membrane as a helical segment. Residues 166–198 (WRNGSEVAKFKNMWTDFQYKYLIVTGKPIVFPK) are Cytoplasmic-facing. A helical membrane pass occupies residues 199 to 219 (LYPITWTLCIVSWSLSLVIIL). Residues 220 to 238 (SQYYLQPDFQFCHTFAYYH) lie on the Extracellular side of the membrane. The helical transmembrane segment at 239-259 (IIAMLNGFCSLWFVNCTAFGT) threads the bilayer. Over 260–304 (ASKAFAKELTDVLATERPAAKLTEYRHLWVDLSHMMQQLGKAYSN) the chain is Cytoplasmic. The chain crosses the membrane as a helical span at residues 305–325 (MYGIYCLVIFFTTIIATYGSL). The Extracellular segment spans residues 326 to 337 (SEIIEHGATYKE). A helical transmembrane segment spans residues 338–358 (VGLFVIVFYCMSLLFIICNEA). Residues 359–414 (HHASKRVGLNFQERLLNVNLTAVDKATQKEVEMFLVAIDKNPPTMNLDGYANINRG) are Cytoplasmic-facing. A helical transmembrane segment spans residues 415 to 435 (LITSNISFMATYLVVLMQFKL). At 436–467 (TLLRQSAKNAFISALKANLSRIRSLDADKVNT) the chain is on the extracellular side. N-linked (GlcNAc...) asparagine glycosylation is present at Asn453.

It belongs to the insect chemoreceptor superfamily. Gustatory receptor (GR) family. Gr21a subfamily. Carbon dioxide-responsive neurons coexpress GPRgr22 and GPRgr24 in the maxillary palp at both larval and adult life stages.

The protein resides in the cell membrane. Gustatory receptor which mediates acceptance or avoidance behavior, depending on its substrates. GPRgr22 and GPRgr24 together are sufficient for olfactory carbon dioxide-chemosensation. This Anopheles gambiae (African malaria mosquito) protein is Gustatory and odorant receptor 22.